Here is a 470-residue protein sequence, read N- to C-terminus: Isocitrate dehydrogenase (NAD(+)), mitochondrial (470 aa).

A mitochondrion-targeting transit peptide spans 1-26; the sequence is MTRVERGRVLARAIERAVAHRASARR. Residues 138 to 140 and N159 contribute to the NAD(+) site; that span reads TVT. D-threo-isocitrate contacts are provided by residues 157 to 163, R193, Y200, K275, and D319; that span reads SPNGAMR. D319 provides a ligand contact to Mg(2+). K324 provides a ligand contact to NAD(+). D-threo-isocitrate is bound at residue D343. Mg(2+)-binding residues include D343 and D347. NAD(+) is bound by residues 380–385 and N399; that span reads HGTVAD.

The protein belongs to the isocitrate and isopropylmalate dehydrogenases family. In terms of assembly, forms homodimers. Mg(2+) is required as a cofactor. The cofactor is Mn(2+).

The protein localises to the mitochondrion. The catalysed reaction is D-threo-isocitrate + NAD(+) = 2-oxoglutarate + CO2 + NADH. The homodimer exhibits allosteric regulation by isocitrate. Performs an essential role in the oxidative function of the tricarboxylic acid cycle and respiration. Catalyzes the decarboxylation of isocitrate to produce 2-oxoglutarate and generate NADH to provide electrons for energy production. This chain is Isocitrate dehydrogenase (NAD(+)), mitochondrial, found in Ostreococcus tauri.